Reading from the N-terminus, the 446-residue chain is Tubulin beta-6 chain (446 aa).

GTP is bound by residues Gln-11, Glu-69, Ser-138, Gly-142, Thr-143, Gly-144, Asn-204, and Asn-226. Glu-69 contributes to the Mg(2+) binding site. The interval Gln-426–Met-446 is disordered. A compositionally biased stretch (acidic residues) spans Thr-429 to Met-446.

It belongs to the tubulin family. Dimer of alpha and beta chains. A typical microtubule is a hollow water-filled tube with an outer diameter of 25 nm and an inner diameter of 15 nM. Alpha-beta heterodimers associate head-to-tail to form protofilaments running lengthwise along the microtubule wall with the beta-tubulin subunit facing the microtubule plus end conferring a structural polarity. Microtubules usually have 13 protofilaments but different protofilament numbers can be found in some organisms and specialized cells. Mg(2+) is required as a cofactor.

It is found in the cytoplasm. Its subcellular location is the cytoskeleton. Its function is as follows. Tubulin is the major constituent of microtubules, a cylinder consisting of laterally associated linear protofilaments composed of alpha- and beta-tubulin heterodimers. Microtubules grow by the addition of GTP-tubulin dimers to the microtubule end, where a stabilizing cap forms. Below the cap, tubulin dimers are in GDP-bound state, owing to GTPase activity of alpha-tubulin. This chain is Tubulin beta-6 chain (TUBB6), found in Zea mays (Maize).